The primary structure comprises 430 residues: Enolase (430 aa).

Gln-164 is a (2R)-2-phosphoglycerate binding site. Residue Glu-208 is the Proton donor of the active site. Mg(2+)-binding residues include Asp-245, Glu-288, and Asp-315. Residues Lys-340, Arg-369, Ser-370, and Lys-391 each coordinate (2R)-2-phosphoglycerate. The active-site Proton acceptor is Lys-340.

It belongs to the enolase family. Mg(2+) is required as a cofactor.

The protein localises to the cytoplasm. Its subcellular location is the secreted. It is found in the cell surface. The catalysed reaction is (2R)-2-phosphoglycerate = phosphoenolpyruvate + H2O. It participates in carbohydrate degradation; glycolysis; pyruvate from D-glyceraldehyde 3-phosphate: step 4/5. Catalyzes the reversible conversion of 2-phosphoglycerate (2-PG) into phosphoenolpyruvate (PEP). It is essential for the degradation of carbohydrates via glycolysis. The protein is Enolase of Thermococcus kodakarensis (strain ATCC BAA-918 / JCM 12380 / KOD1) (Pyrococcus kodakaraensis (strain KOD1)).